Consider the following 319-residue polypeptide: Annexin A4 (319 aa).

A2 carries the N-acetylalanine modification. T7 is modified (phosphothreonine). A Phosphoserine modification is found at S12. Annexin repeat units follow at residues 14 to 85 (FNAA…GMMT), 86 to 157 (PTVL…SLSA), 169 to 241 (ALMR…AIVK), and 245 to 316 (NKSA…ILCG). K213, K293, and K300 each carry N6-acetyllysine.

Belongs to the annexin family. Monomer. Binds to SFTPA1 in a Ca(2+)-dependent manner.

The protein localises to the zymogen granule membrane. Functionally, may play a role in alveolar type II cells through interaction with the surfactant protein SFTPA1 (SP-A). The chain is Annexin A4 (ANXA4) from Bos taurus (Bovine).